The following is a 151-amino-acid chain: UPF0756 membrane protein HS_0993 (151 aa).

The next 4 helical transmembrane spans lie at 1 to 21, 52 to 72, 81 to 101, and 123 to 143; these read MSLQ…LGVL, YGVN…IVSG, ALIH…AWFG, and ILGV…AGIL.

This sequence belongs to the UPF0756 family.

It localises to the cell membrane. This chain is UPF0756 membrane protein HS_0993, found in Histophilus somni (strain 129Pt) (Haemophilus somnus).